Consider the following 499-residue polypeptide: Catalase (499 aa).

Residues 1-25 (MTDRPIMTTSAGAPIPDNQNSLTAG) are disordered. A compositionally biased stretch (polar residues) spans 7–23 (MTTSAGAPIPDNQNSLT). Catalysis depends on residues histidine 55 and asparagine 127. Residue tyrosine 337 coordinates heme.

It belongs to the catalase family. Homotetramer. Heme serves as cofactor.

It localises to the periplasm. It carries out the reaction 2 H2O2 = O2 + 2 H2O. Functionally, decomposes hydrogen peroxide into water and oxygen; serves to protect cells from the toxic effects of hydrogen peroxide. This Brucella abortus biovar 1 (strain 9-941) protein is Catalase (katA).